The chain runs to 306 residues: Probable cobalamin biosynthesis protein CobD (306 aa).

The next 5 helical transmembrane spans lie at 54 to 74 (LFGF…TYEI), 88 to 108 (ISIY…IEFS), 155 to 175 (ITDS…PGAF), 215 to 235 (IAGM…KSAI), and 286 to 306 (SLKA…VLLM).

The protein belongs to the CobD/CbiB family.

It is found in the cell membrane. Its pathway is cofactor biosynthesis; adenosylcobalamin biosynthesis. Its function is as follows. Converts cobyric acid to cobinamide by the addition of aminopropanol on the F carboxylic group. The protein is Probable cobalamin biosynthesis protein CobD of Methanococcus maripaludis (strain C7 / ATCC BAA-1331).